Reading from the N-terminus, the 52-residue chain is UPF0391 membrane protein ABAYE0050 (52 aa).

The next 2 membrane-spanning stretches (helical) occupy residues 6–26 (IIFA…VAGL) and 30–50 (FAVI…ISRG).

This sequence belongs to the UPF0391 family.

The protein localises to the cell membrane. The polypeptide is UPF0391 membrane protein ABAYE0050 (Acinetobacter baumannii (strain AYE)).